A 445-amino-acid chain; its full sequence is Bifunctional protein GlmU (445 aa).

A pyrophosphorylase region spans residues Met1–Arg218. UDP-N-acetyl-alpha-D-glucosamine-binding positions include Leu6–Gly9, Lys20, Gln69, Gly74–Thr75, Tyr96–Asp98, Gly134, Glu147, Asn162, and Asn216. A Mg(2+)-binding site is contributed by Asp98. Residue Asn216 participates in Mg(2+) binding. Residues Lys219–Asn239 are linker. An N-acetyltransferase region spans residues Gly240–Glu445. Residues Arg321 and Lys339 each coordinate UDP-N-acetyl-alpha-D-glucosamine. His351 (proton acceptor) is an active-site residue. Positions 354 and 365 each coordinate UDP-N-acetyl-alpha-D-glucosamine. Residues Ala368, Asn374–Tyr375, Ser393, Ala411, and Arg428 each bind acetyl-CoA.

In the N-terminal section; belongs to the N-acetylglucosamine-1-phosphate uridyltransferase family. This sequence in the C-terminal section; belongs to the transferase hexapeptide repeat family. In terms of assembly, homotrimer. The cofactor is Mg(2+).

Its subcellular location is the cytoplasm. It carries out the reaction alpha-D-glucosamine 1-phosphate + acetyl-CoA = N-acetyl-alpha-D-glucosamine 1-phosphate + CoA + H(+). It catalyses the reaction N-acetyl-alpha-D-glucosamine 1-phosphate + UTP + H(+) = UDP-N-acetyl-alpha-D-glucosamine + diphosphate. It participates in nucleotide-sugar biosynthesis; UDP-N-acetyl-alpha-D-glucosamine biosynthesis; N-acetyl-alpha-D-glucosamine 1-phosphate from alpha-D-glucosamine 6-phosphate (route II): step 2/2. The protein operates within nucleotide-sugar biosynthesis; UDP-N-acetyl-alpha-D-glucosamine biosynthesis; UDP-N-acetyl-alpha-D-glucosamine from N-acetyl-alpha-D-glucosamine 1-phosphate: step 1/1. Its pathway is bacterial outer membrane biogenesis; LPS lipid A biosynthesis. Functionally, catalyzes the last two sequential reactions in the de novo biosynthetic pathway for UDP-N-acetylglucosamine (UDP-GlcNAc). The C-terminal domain catalyzes the transfer of acetyl group from acetyl coenzyme A to glucosamine-1-phosphate (GlcN-1-P) to produce N-acetylglucosamine-1-phosphate (GlcNAc-1-P), which is converted into UDP-GlcNAc by the transfer of uridine 5-monophosphate (from uridine 5-triphosphate), a reaction catalyzed by the N-terminal domain. The sequence is that of Bifunctional protein GlmU from Thermotoga petrophila (strain ATCC BAA-488 / DSM 13995 / JCM 10881 / RKU-1).